Consider the following 1214-residue polypeptide: SWI/SNF complex subunit SMARCC2 (1214 aa).

The interval M1–A274 is marR-like, BRCT and chromo domains module. The MarR-like domain maps to P10–C136. The region spanning P140–G183 is the BRCT; N-terminus domain. Residues E189–P217 form the Chromo domain. The BRCT; C-terminus domain occupies K233 to Y257. Positions Y257–H413 are disordered. The segment covering K275 to P284 has biased composition (polar residues). A phosphoserine mark is found at S283, S286, S302, S304, and S306. Position 312 is an N6-(ADP-ribosyl)lysine (K312). K326 carries the N6-acetyllysine modification. Residues H331 to D344 show a composition bias toward basic and acidic residues. Phosphoserine is present on residues S347 and S387. The span at D379–N398 shows a compositional bias: acidic residues. The SWIRM domain occupies I424–T521. Residue T548 is modified to Phosphothreonine. Residues K564, K566, K568, and K592 each participate in a glycyl lysine isopeptide (Lys-Gly) (interchain with G-Cter in SUMO2) cross-link. Positions S596 to P647 constitute an SANT domain. K704 participates in a covalent cross-link: Glycyl lysine isopeptide (Lys-Gly) (interchain with G-Cter in SUMO2). The segment at K724–D852 is disordered. Composition is skewed to basic and acidic residues over residues E747 to E777 and E784 to D852. K787 participates in a covalent cross-link: Glycyl lysine isopeptide (Lys-Gly) (interchain with G-Cter in SUMO2). S813 bears the Phosphoserine mark. K848 participates in a covalent cross-link: Glycyl lysine isopeptide (Lys-Gly) (interchain with G-Cter in SUMO2). Residues E907–F934 are a coiled coil. 3 disordered regions span residues R947–V983, P997–P1092, and L1182–Q1214. A compositionally biased stretch (low complexity) spans Q949–Q959. Residues Q960–P974 are compositionally biased toward pro residues. Positions P997–P1033 are enriched in low complexity. 2 stretches are compositionally biased toward pro residues: residues G1034–F1051 and S1186–P1202.

Belongs to the SMARCC family. In terms of assembly, component of the multiprotein chromatin-remodeling complexes SWI/SNF: SWI/SNF-A (BAF), SWI/SNF-B (PBAF) and related complexes. The canonical complex contains a catalytic subunit (either SMARCA4/BRG1/BAF190A or SMARCA2/BRM/BAF190B) and at least SMARCE1, ACTL6A/BAF53, SMARCC1/BAF155, SMARCC2/BAF170, and SMARCB1/SNF5/BAF47. Other subunits specific to each of the complexes may also be present permitting several possible combinations developmentally and tissue specific. Component of the BAF complex, which includes at least actin (ACTB), ARID1A/BAF250A, ARID1B/BAF250B, SMARCA2/BRM, SMARCA4/BRG1, ACTL6A/BAF53, ACTL6B/BAF53B, SMARCE1/BAF57, SMARCC1/BAF155, SMARCC2/BAF170, SMARCB1/SNF5/INI1, and one or more SMARCD1/BAF60A, SMARCD2/BAF60B, or SMARCD3/BAF60C. In muscle cells, the BAF complex also contains DPF3. Component of neural progenitors-specific chromatin remodeling complex (npBAF complex) composed of at least, ARID1A/BAF250A or ARID1B/BAF250B, SMARCD1/BAF60A, SMARCD3/BAF60C, SMARCA2/BRM/BAF190B, SMARCA4/BRG1/BAF190A, SMARCB1/BAF47, SMARCC1/BAF155, SMARCE1/BAF57, SMARCC2/BAF170, PHF10/BAF45A, ACTL6A/BAF53A and actin. Component of neuron-specific chromatin remodeling complex (nBAF complex) composed of at least, ARID1A/BAF250A or ARID1B/BAF250B, SMARCD1/BAF60A, SMARCD3/BAF60C, SMARCA2/BRM/BAF190B, SMARCA4/BRG1/BAF190A, SMARCB1/BAF47, SMARCC1/BAF155, SMARCE1/BAF57, SMARCC2/BAF170, DPF1/BAF45B, DPF3/BAF45C, ACTL6B/BAF53B and actin. Component of the SWI/SNF-B (PBAF) chromatin remodeling complex, at least composed of SMARCA4/BRG1, SMARCB1/BAF47/SNF5, ACTL6A/BAF53A or ACTL6B/BAF53B, SMARCE1/BAF57, SMARCD1/BAF60A, SMARCD2/BAF60B, perhaps SMARCD3/BAF60C, SMARCC1/BAF155, SMARCC2/BAF170, PBRM1/BAF180, ARID2/BAF200 and actin. May also interact with the SIN3A histone deacetylase transcription repressor complex in conjunction with SMARCA2 and SMARCA4. Interacts with SMARD1. Interacts with KDM6B. Interaction with RCOR1. Interacts with DPF2. Interacts with ERCC6. Interacts with FOS. Mono-ADP-ribosylation at Lys-312 by SIRT6 promotes recruitment to the enhancer region of the Heme oxygenase-1 (HO-1) locus, leading to transcription activation of the locus. Ubiquitously expressed.

Its subcellular location is the nucleus. Its function is as follows. Involved in transcriptional activation and repression of select genes by chromatin remodeling (alteration of DNA-nucleosome topology). Component of SWI/SNF chromatin remodeling complexes that carry out key enzymatic activities, changing chromatin structure by altering DNA-histone contacts within a nucleosome in an ATP-dependent manner. Can stimulate the ATPase activity of the catalytic subunit of these complexes. May be required for CoREST dependent repression of neuronal specific gene promoters in non-neuronal cells. Belongs to the neural progenitors-specific chromatin remodeling complex (npBAF complex) and the neuron-specific chromatin remodeling complex (nBAF complex). During neural development a switch from a stem/progenitor to a postmitotic chromatin remodeling mechanism occurs as neurons exit the cell cycle and become committed to their adult state. The transition from proliferating neural stem/progenitor cells to postmitotic neurons requires a switch in subunit composition of the npBAF and nBAF complexes. As neural progenitors exit mitosis and differentiate into neurons, npBAF complexes which contain ACTL6A/BAF53A and PHF10/BAF45A, are exchanged for homologous alternative ACTL6B/BAF53B and DPF1/BAF45B or DPF3/BAF45C subunits in neuron-specific complexes (nBAF). The npBAF complex is essential for the self-renewal/proliferative capacity of the multipotent neural stem cells. The nBAF complex along with CREST plays a role regulating the activity of genes essential for dendrite growth. Critical regulator of myeloid differentiation, controlling granulocytopoiesis and the expression of genes involved in neutrophil granule formation. This is SWI/SNF complex subunit SMARCC2 (SMARCC2) from Homo sapiens (Human).